A 211-amino-acid polypeptide reads, in one-letter code: Lysozyme g (211 aa).

The signal sequence occupies residues 1–26 (MLGKNDPMCLVLVLLGLTALLGICQG). Cystine bridges form between C30–C86 and C44–C55. Catalysis depends on residues E99 and D112.

Belongs to the glycosyl hydrolase 23 family. Granulocyte compartment of myelomonocytic cells.

It is found in the secreted. It catalyses the reaction Hydrolysis of (1-&gt;4)-beta-linkages between N-acetylmuramic acid and N-acetyl-D-glucosamine residues in a peptidoglycan and between N-acetyl-D-glucosamine residues in chitodextrins.. The sequence is that of Lysozyme g from Gallus gallus (Chicken).